The chain runs to 227 residues: Cytochrome c oxidase subunit 2 (227 aa).

Residues Met-1–Ser-14 are Mitochondrial intermembrane-facing. A helical membrane pass occupies residues Pro-15–Met-45. Topologically, residues Leu-46–Gln-59 are mitochondrial matrix. A helical membrane pass occupies residues Glu-60 to Met-87. Over Asp-88–Ile-227 the chain is Mitochondrial intermembrane. His-161, Cys-196, Glu-198, Cys-200, His-204, and Met-207 together coordinate Cu cation. Glu-198 serves as a coordination point for Mg(2+).

Belongs to the cytochrome c oxidase subunit 2 family. Component of the cytochrome c oxidase (complex IV, CIV), a multisubunit enzyme composed of 14 subunits. The complex is composed of a catalytic core of 3 subunits MT-CO1, MT-CO2 and MT-CO3, encoded in the mitochondrial DNA, and 11 supernumerary subunits COX4I, COX5A, COX5B, COX6A, COX6B, COX6C, COX7A, COX7B, COX7C, COX8 and NDUFA4, which are encoded in the nuclear genome. The complex exists as a monomer or a dimer and forms supercomplexes (SCs) in the inner mitochondrial membrane with NADH-ubiquinone oxidoreductase (complex I, CI) and ubiquinol-cytochrome c oxidoreductase (cytochrome b-c1 complex, complex III, CIII), resulting in different assemblies (supercomplex SCI(1)III(2)IV(1) and megacomplex MCI(2)III(2)IV(2)). Found in a complex with TMEM177, COA6, COX18, COX20, SCO1 and SCO2. Interacts with TMEM177 in a COX20-dependent manner. Interacts with COX20. Interacts with COX16. Cu cation serves as cofactor.

Its subcellular location is the mitochondrion inner membrane. The enzyme catalyses 4 Fe(II)-[cytochrome c] + O2 + 8 H(+)(in) = 4 Fe(III)-[cytochrome c] + 2 H2O + 4 H(+)(out). Its function is as follows. Component of the cytochrome c oxidase, the last enzyme in the mitochondrial electron transport chain which drives oxidative phosphorylation. The respiratory chain contains 3 multisubunit complexes succinate dehydrogenase (complex II, CII), ubiquinol-cytochrome c oxidoreductase (cytochrome b-c1 complex, complex III, CIII) and cytochrome c oxidase (complex IV, CIV), that cooperate to transfer electrons derived from NADH and succinate to molecular oxygen, creating an electrochemical gradient over the inner membrane that drives transmembrane transport and the ATP synthase. Cytochrome c oxidase is the component of the respiratory chain that catalyzes the reduction of oxygen to water. Electrons originating from reduced cytochrome c in the intermembrane space (IMS) are transferred via the dinuclear copper A center (CU(A)) of subunit 2 and heme A of subunit 1 to the active site in subunit 1, a binuclear center (BNC) formed by heme A3 and copper B (CU(B)). The BNC reduces molecular oxygen to 2 water molecules using 4 electrons from cytochrome c in the IMS and 4 protons from the mitochondrial matrix. This is Cytochrome c oxidase subunit 2 (MT-CO2) from Malacothrix typica (Long-eared mouse).